Reading from the N-terminus, the 237-residue chain is DCN1-like protein 5 (237 aa).

Residues serine 9, serine 41, and serine 48 each carry the phosphoserine modification. Residues 46–232 (FSSKKCLAWF…LLDEFVEWQK (187 aa)) form the DCUN1 domain.

As to quaternary structure, part of a complex that contains DCUN1D5, CUL1 and RBX1; this interaction is bridged by CUL1. Interacts (via the DCUN1 domain) with the unneddylated cullins: interacts with CUL1, CUL2, CUL3, CUL4A, CUL4B and CUL5; these interactions promote the cullin neddylation and the identity of the cullin dictates the affinity of the interaction. Interacts (via DCUN1 domain) with UBE2M (N-terminally acetylated form) and probably with UBE2F (N-terminally acetylated form). May also interact with regulators or subunits of cullin-RING ligases such as RBX1, RNF7, ELOB and DDB1; these interactions are bridged by cullins. Interacts with CAND1; this interaction is bridged by cullins and strongly inhibits the neddylation of cullins. These CAND-cullin-DCNL complexes can only be neddylated in the presence of a substrate adapter. Phosphorylation at Ser-41 is independent of cullin's interaction. Phosphorylated in response to both TICAM1 and MYD88 dependent Toll-like receptor (TLR) pathway activation. Phosphorylated in response to IL1B stimulation.

Its subcellular location is the nucleus. The protein localises to the cytoplasm. The protein resides in the cytoskeleton. It localises to the spindle. Its function is as follows. Contributes to the neddylation of all cullins by transferring NEDD8 from N-terminally acetylated NEDD8-conjugating E2s enzyme to different cullin C-terminal domain-RBX complexes which is necessary for the activation of cullin-RING E3 ubiquitin ligases (CRLs). May play a role in DNA damage response and may participate in cell proliferation and anchorage-independent cell growth. The protein is DCN1-like protein 5 of Pongo abelii (Sumatran orangutan).